A 657-amino-acid polypeptide reads, in one-letter code: UvrABC system protein B (657 aa).

Residues 25 to 182 enclose the Helicase ATP-binding domain; sequence KSIKKGNEFQ…KKLIEIQYER (158 aa). 38–45 is an ATP binding site; the sequence is GVTGSGKT. Residues 91-114 carry the Beta-hairpin motif; that stretch reads YYDYYQPEAYVPQTDTFIEKDASI. One can recognise a Helicase C-terminal domain in the interval 429-595; sequence QIDDLYTEIQ…TINKEVRDLI (167 aa). In terms of domain architecture, UVR spans 621-656; the sequence is KKLIKEYTEEMMLAAKNLQFERAAQLRDEIEELKGK.

The protein belongs to the UvrB family. In terms of assembly, forms a heterotetramer with UvrA during the search for lesions. Interacts with UvrC in an incision complex.

Its subcellular location is the cytoplasm. In terms of biological role, the UvrABC repair system catalyzes the recognition and processing of DNA lesions. A damage recognition complex composed of 2 UvrA and 2 UvrB subunits scans DNA for abnormalities. Upon binding of the UvrA(2)B(2) complex to a putative damaged site, the DNA wraps around one UvrB monomer. DNA wrap is dependent on ATP binding by UvrB and probably causes local melting of the DNA helix, facilitating insertion of UvrB beta-hairpin between the DNA strands. Then UvrB probes one DNA strand for the presence of a lesion. If a lesion is found the UvrA subunits dissociate and the UvrB-DNA preincision complex is formed. This complex is subsequently bound by UvrC and the second UvrB is released. If no lesion is found, the DNA wraps around the other UvrB subunit that will check the other stand for damage. The polypeptide is UvrABC system protein B (Clostridium botulinum (strain Alaska E43 / Type E3)).